A 1713-amino-acid polypeptide reads, in one-letter code: Serine/threonine-protein kinase MRCK beta (1713 aa).

In terms of domain architecture, Protein kinase spans 76 to 342 (FEIIKVIGRG…IEDFKKHAFF (267 aa)). Residues 82 to 90 (IGRGAFGEV) and K105 contribute to the ATP site. D200 acts as the Proton acceptor in catalysis. Phosphoserine; by autocatalysis occurs at positions 221 and 233. The residue at position 239 (T239) is a Phosphothreonine; by autocatalysis. Residues 343-413 (EGLNWENIRN…TTESCFSDRG (71 aa)) form the AGC-kinase C-terminal domain. At T423 the chain carries Phosphothreonine. Residues 434 to 649 (LENSLQIEAY…ASKERKLREH (216 aa)) adopt a coiled-coil conformation. Residues 461–485 (LQESTQTVQSLHGSTRALGNSNRDK) form a disordered region. Positions 463 to 481 (ESTQTVQSLHGSTRALGNS) are enriched in polar residues. Position 671 is an omega-N-methylarginine (R671). Coiled-coil stretches lie at residues 681-815 (QEIS…AHWE) and 882-939 (ALEA…FRAD). Residue S927 is modified to Phosphoserine. The residue at position 954 (Y954) is a Phosphotyrosine. Composition is skewed to polar residues over residues 971 to 994 (ASDQ…TSTE) and 1001 to 1014 (RSQQ…LPNT). The disordered stretch occupies residues 971–1014 (ASDQETQASKLDLSPSVSVATSTEQQEDAARSQQRPSTVPLPNT). Residues 1026 to 1076 (AHQFSIKSFPSPTQCSHCTSLMVGLIRQGYACEVCAFSCHVSCKDSAPQVC) form a Phorbol-ester/DAG-type zinc finger. A PH domain is found at 1096 to 1215 (GTAYKGYVKV…WVGILEGLQA (120 aa)). The region spanning 1241 to 1515 (IKTVLAAAIV…RPLNSDGSLN (275 aa)) is the CNH domain. A CRIB domain is found at 1585–1598 (ISNPTNFNHVAHMG). The segment at 1615–1713 (PTAQEEKQGP…EGLDQPACDA (99 aa)) is disordered. Residues 1666–1677 (DFDKEPDSDSTK) show a composition bias toward basic and acidic residues. S1682, S1684, S1688, S1692, and S1695 each carry phosphoserine.

It belongs to the protein kinase superfamily. AGC Ser/Thr protein kinase family. DMPK subfamily. In terms of assembly, homodimer and homotetramer via the coiled coil regions. Interacts tightly with GTP-bound but not GDP-bound CDC42. Interacts with TJP1; this interaction requires the presence of catalytically active CDC42. Forms a tripartite complex with MYO18A and LURAP1 with the latter acting as an adapter connecting CDC42BPB and MYO18A. LURAP1 binding results in activation of CDC42BPB by abolition of its negative autoregulation. Interacts with STRIP1, STRN3 and SIKE1. Interacts with CPNE4 (via VWFA domain). Interacts with LURAP1. Interacts (via AGC-kinase C-terminal domain) with FAM89B/LRAP25 (via LRR repeat). Forms a tripartite complex with FAM89B/LRAP25 and LIMK1. The cofactor is Mg(2+). Post-translationally, proteolytically cleaved by caspases upon apoptosis induction. In terms of tissue distribution, expressed in all tissues examined with highest levels in lung and kidney.

Its subcellular location is the cytoplasm. It localises to the cell membrane. The protein localises to the cell junction. The protein resides in the cell projection. It is found in the lamellipodium. The catalysed reaction is L-seryl-[protein] + ATP = O-phospho-L-seryl-[protein] + ADP + H(+). The enzyme catalyses L-threonyl-[protein] + ATP = O-phospho-L-threonyl-[protein] + ADP + H(+). Its activity is regulated as follows. Maintained in an inactive, closed conformation by an interaction between the kinase domain and the negative autoregulatory C-terminal coiled-coil region. Agonist binding to the phorbol ester binding site disrupts this, releasing the kinase domain to allow N-terminus-mediated dimerization and kinase activation by transautophosphorylation. Inhibited by chelerythrine chloride. Serine/threonine-protein kinase which is an important downstream effector of CDC42 and plays a role in the regulation of cytoskeleton reorganization and cell migration. Regulates actin cytoskeletal reorganization via phosphorylation of PPP1R12C and MYL9/MLC2. In concert with MYO18A and LURAP1, is involved in modulating lamellar actomyosin retrograde flow that is crucial to cell protrusion and migration. Phosphorylates PPP1R12A. In concert with FAM89B/LRAP25 mediates the targeting of LIMK1 to the lamellipodium resulting in its activation and subsequent phosphorylation of CFL1 which is important for lamellipodial F-actin regulation. The protein is Serine/threonine-protein kinase MRCK beta of Rattus norvegicus (Rat).